The primary structure comprises 197 residues: Ribonuclease HII (197 aa).

The 184-residue stretch at 14–197 folds into the RNase H type-2 domain; sequence EKIVGIDEAG…RSFNLGVNDD (184 aa). 3 residues coordinate a divalent metal cation: aspartate 20, glutamate 21, and aspartate 112.

Belongs to the RNase HII family. Mn(2+) serves as cofactor. Mg(2+) is required as a cofactor.

The protein localises to the cytoplasm. It catalyses the reaction Endonucleolytic cleavage to 5'-phosphomonoester.. Its function is as follows. Endonuclease that specifically degrades the RNA of RNA-DNA hybrids. This chain is Ribonuclease HII, found in Sulfurihydrogenibium sp. (strain YO3AOP1).